Consider the following 158-residue polypeptide: Pyruvoyl-dependent arginine decarboxylase (158 aa).

Ser-44 carries the post-translational modification Pyruvic acid (Ser).

This sequence belongs to the PdaD family. Pyruvate serves as cofactor.

The catalysed reaction is L-arginine + H(+) = agmatine + CO2. In Pyrococcus abyssi (strain GE5 / Orsay), this protein is Pyruvoyl-dependent arginine decarboxylase.